The chain runs to 165 residues: Shikimate kinase (165 aa).

11 to 16 (GAGKTT) is a binding site for ATP. A Mg(2+)-binding site is contributed by threonine 15. Positions 33, 57, and 78 each coordinate substrate. Arginine 116 contacts ATP. Position 134 (arginine 134) interacts with substrate.

Belongs to the shikimate kinase family. Monomer. Mg(2+) is required as a cofactor.

The protein resides in the cytoplasm. The enzyme catalyses shikimate + ATP = 3-phosphoshikimate + ADP + H(+). The protein operates within metabolic intermediate biosynthesis; chorismate biosynthesis; chorismate from D-erythrose 4-phosphate and phosphoenolpyruvate: step 5/7. In terms of biological role, catalyzes the specific phosphorylation of the 3-hydroxyl group of shikimic acid using ATP as a cosubstrate. In Bacillus mycoides (strain KBAB4) (Bacillus weihenstephanensis), this protein is Shikimate kinase.